The following is a 464-amino-acid chain: Argininosuccinate lyase (464 aa).

The protein belongs to the lyase 1 family. Argininosuccinate lyase subfamily.

Its subcellular location is the cytoplasm. The enzyme catalyses 2-(N(omega)-L-arginino)succinate = fumarate + L-arginine. The protein operates within amino-acid biosynthesis; L-arginine biosynthesis; L-arginine from L-ornithine and carbamoyl phosphate: step 3/3. The polypeptide is Argininosuccinate lyase (Alcanivorax borkumensis (strain ATCC 700651 / DSM 11573 / NCIMB 13689 / SK2)).